The chain runs to 252 residues: 3-dehydroquinate dehydratase (252 aa).

3-dehydroquinate is bound by residues Glu-47–Arg-49 and Arg-83. The Proton donor/acceptor role is filled by His-144. Lys-171 serves as the catalytic Schiff-base intermediate with substrate. 3 residues coordinate 3-dehydroquinate: Arg-213, Ser-232, and Gln-236.

Belongs to the type-I 3-dehydroquinase family. In terms of assembly, homodimer.

It carries out the reaction 3-dehydroquinate = 3-dehydroshikimate + H2O. The protein operates within metabolic intermediate biosynthesis; chorismate biosynthesis; chorismate from D-erythrose 4-phosphate and phosphoenolpyruvate: step 3/7. Involved in the third step of the chorismate pathway, which leads to the biosynthesis of aromatic amino acids. Catalyzes the cis-dehydration of 3-dehydroquinate (DHQ) and introduces the first double bond of the aromatic ring to yield 3-dehydroshikimate. The protein is 3-dehydroquinate dehydratase of Lactiplantibacillus plantarum (strain ATCC BAA-793 / NCIMB 8826 / WCFS1) (Lactobacillus plantarum).